Reading from the N-terminus, the 126-residue chain is Holo-[acyl-carrier-protein] synthase (126 aa).

Asp-8 and Glu-57 together coordinate Mg(2+).

The protein belongs to the P-Pant transferase superfamily. AcpS family. Mg(2+) is required as a cofactor.

The protein resides in the cytoplasm. It carries out the reaction apo-[ACP] + CoA = holo-[ACP] + adenosine 3',5'-bisphosphate + H(+). Transfers the 4'-phosphopantetheine moiety from coenzyme A to a Ser of acyl-carrier-protein. In Halorhodospira halophila (strain DSM 244 / SL1) (Ectothiorhodospira halophila (strain DSM 244 / SL1)), this protein is Holo-[acyl-carrier-protein] synthase.